The chain runs to 161 residues: Peptidyl-prolyl cis-trans isomerase-like 1 (161 aa).

Residues M1–V155 form the PPIase cyclophilin-type domain.

This sequence belongs to the cyclophilin-type PPIase family. PPIL1 subfamily.

It carries out the reaction [protein]-peptidylproline (omega=180) = [protein]-peptidylproline (omega=0). PPIases accelerate the folding of proteins. It catalyzes the cis-trans isomerization of proline imidic peptide bonds in oligopeptides. The protein is Peptidyl-prolyl cis-trans isomerase-like 1 (cyp1) of Aspergillus oryzae (strain ATCC 42149 / RIB 40) (Yellow koji mold).